The sequence spans 209 residues: ATP synthase subunit b', chloroplastic (209 aa).

The N-terminal 62 residues, 1 to 62 (MASLLARPQQ…NALMAMPAAA (62 aa)), are a transit peptide targeting the chloroplast. A helical membrane pass occupies residues 67–87 (IFDFNLTLPVMAGEFLLLMVF).

The protein belongs to the ATPase B chain family. In terms of assembly, F-type ATPases have 2 components, F(1) - the catalytic core - and F(0) - the membrane proton channel. F(1) has five subunits: alpha(3), beta(3), gamma(1), delta(1), epsilon(1). F(0) has four main subunits: a(1), b(1), b'(1) and c(10-14). The alpha and beta chains form an alternating ring which encloses part of the gamma chain. F(1) is attached to F(0) by a central stalk formed by the gamma and epsilon chains, while a peripheral stalk is formed by the delta, b and b' chains.

Its subcellular location is the plastid. It is found in the chloroplast thylakoid membrane. In terms of biological role, f(1)F(0) ATP synthase produces ATP from ADP in the presence of a proton or sodium gradient. F-type ATPases consist of two structural domains, F(1) containing the extramembraneous catalytic core and F(0) containing the membrane proton channel, linked together by a central stalk and a peripheral stalk. During catalysis, ATP synthesis in the catalytic domain of F(1) is coupled via a rotary mechanism of the central stalk subunits to proton translocation. Functionally, component of the F(0) channel, it forms part of the peripheral stalk, linking F(1) to F(0). The b'-subunit is a diverged and duplicated form of b found in plants and photosynthetic bacteria. The protein is ATP synthase subunit b', chloroplastic of Chlamydomonas reinhardtii (Chlamydomonas smithii).